The following is a 161-amino-acid chain: Allophycocyanin alpha-B chain (161 aa).

Residue Asn-71 is modified to N4-methylasparagine. Cys-81 is a binding site for (2R,3E)-phycocyanobilin.

The protein belongs to the phycobiliprotein family. In terms of processing, contains one covalently linked bilin chromophore.

It localises to the plastid. It is found in the chloroplast thylakoid membrane. In terms of biological role, allophycocyanin is a photosynthetic bile pigment-protein complex with maximum absorption at approximately 650 nanometers. The polypeptide is Allophycocyanin alpha-B chain (apcD) (Porphyra purpurea (Red seaweed)).